Here is a 200-residue protein sequence, read N- to C-terminus: Holliday junction resolvase RecU (200 aa).

The Mg(2+) site is built by threonine 82, aspartate 84, glutamate 97, and glutamine 116.

This sequence belongs to the RecU family. Requires Mg(2+) as cofactor.

Its subcellular location is the cytoplasm. It carries out the reaction Endonucleolytic cleavage at a junction such as a reciprocal single-stranded crossover between two homologous DNA duplexes (Holliday junction).. Functionally, endonuclease that resolves Holliday junction intermediates in genetic recombination. Cleaves mobile four-strand junctions by introducing symmetrical nicks in paired strands. Promotes annealing of linear ssDNA with homologous dsDNA. Required for DNA repair, homologous recombination and chromosome segregation. The chain is Holliday junction resolvase RecU from Streptococcus gordonii (strain Challis / ATCC 35105 / BCRC 15272 / CH1 / DL1 / V288).